We begin with the raw amino-acid sequence, 941 residues long: MTVDYKNTLNLPETSFPMRGDLAKREPDKLKNWYEKNLYQKIRKASKGKKSFILHDGPPYANGNIHIGHAVNKILKDIIIKSKTALGFDSPYIPGWDCHGLPIELKVEGLVGKPNEKISAAEFRQKCREYAAEQVEGQKKDFIRLGVLGDWDNPYLTMNFDTEANIIRTLGKVIENGHLYKGSKPVHWCLDCGSSLAEAEVEYEDKVSPSIYVRFPAESADEIEAKFSAQGRGQGKLSAIIWTTTPWTMPSNRAIAVNADLEYNLVQLGDERVILAAELVESVAKAVGIEHIEILGSVKGDDLELSRFHHPFYDFTVPVILGDHVTTDGGTGLVHTAPDHGLDDFIVGKQYDLPMAGLVSNDGKFISTTEFFAGKGVFEANPLVIEKLQEVGNLLKVEKIKHSYPHCWRHKTPIIFRATPQWFIGMETQGLRQQALGEIKQVRWIPDWGQARIEKMVENRPDWCISRQRTWGVPMTLFVHKETEELHPRTLDLLEEVAKRVERAGIQAWWDLDEKELLGADAETYRKVPDTLDVWFDSGSTYSSVVANRLEFNGQDIDMYLEGSDQHRGWFMSSLMLSTATDSKAPYKQVLTHGFTVDGQGRKMSKSIGNIVTPQEVMDKFGGDILRLWVASTDYTGEMTVSDEILKRAADSYRRIRNTARFLLANLNGFDPKRDLVKPEKMISLDRWAVACALDAQNEIKDAYDNYQFHTVVQRLMRFCSVEMGSFYLDIIKDRQYTTKADSLARRSCQTALWHIAEALVRWMAPILSFTADEIWQHLPQTESARAEFVFTEEFYQGLFGLGEDEKLDDAYWQQLIKVRSEVNRVLEISRNNKEIGGGLEAEVTVYANDEYRALLAQLGNELRFVLITSKVDVKSLSEKPADLADSELEGIAVSVTRSNAEKCPRCWHYSDEIGVSPEHPTLCARCVENVVGNGEVRYFA.

A 'HIGH' region motif is present at residues 59–69 (PYANGNIHIGH). L-isoleucyl-5'-AMP is bound at residue E562. A 'KMSKS' region motif is present at residues 603 to 607 (KMSKS). Residue K606 participates in ATP binding. Residues C904, C907, C924, and C927 each contribute to the Zn(2+) site.

The protein belongs to the class-I aminoacyl-tRNA synthetase family. IleS type 1 subfamily. As to quaternary structure, monomer. Zn(2+) is required as a cofactor.

The protein resides in the cytoplasm. The enzyme catalyses tRNA(Ile) + L-isoleucine + ATP = L-isoleucyl-tRNA(Ile) + AMP + diphosphate. Functionally, catalyzes the attachment of isoleucine to tRNA(Ile). As IleRS can inadvertently accommodate and process structurally similar amino acids such as valine, to avoid such errors it has two additional distinct tRNA(Ile)-dependent editing activities. One activity is designated as 'pretransfer' editing and involves the hydrolysis of activated Val-AMP. The other activity is designated 'posttransfer' editing and involves deacylation of mischarged Val-tRNA(Ile). This is Isoleucine--tRNA ligase from Haemophilus influenzae (strain ATCC 51907 / DSM 11121 / KW20 / Rd).